A 95-amino-acid chain; its full sequence is Large ribosomal subunit protein bL25 (95 aa).

This sequence belongs to the bacterial ribosomal protein bL25 family. Part of the 50S ribosomal subunit; part of the 5S rRNA/L5/L18/L25 subcomplex. Contacts the 5S rRNA. Binds to the 5S rRNA independently of L5 and L18.

In terms of biological role, this is one of the proteins that binds to the 5S RNA in the ribosome where it forms part of the central protuberance. This Aeromonas salmonicida (strain A449) protein is Large ribosomal subunit protein bL25.